The primary structure comprises 824 residues: MDRKYDFKSIEAKWQAYWENKQLFKVEEDPEKPKYYNLEMFPYPSGHLHMGHVRNYAIGDVVARFKSMNGFNVLHPMGWDAFGLPAENAAIKNAIHPATWTYSNIENMKRQLKTMGISYDWDRELATCKPDYYKFTQWMFLKLYENKLAYKKKSAVNWCPSCQTVLANEQVVDGACERCEAVIEKKQLEQWFFKITDYAQRLLDDLALLPGWPEKVKTMQKNWIGRSEGCEFSLHIEDSDEVLTVFTTRPDTVFGVTYMVLAPEHPLVEKICHPEQEKEVKAFVNKMKYLNEMARTSTEAEKEGVFTGAYAINPMDGSRIPIWIANYVLMDYGTGAIMAVPAHDQRDFEFARKYDIPVKVVIKGEDTPLDGNLLQESYPGDGHMVNSGNFDGLTVEEGQKAVIKFMEEKGIGQGTVNYRLRDWLISRQRYWGAPIPIVYCPECGPVAVPEEELPLYLPEDIDFKPYAESPLKHLERFYKTTCPSCGKEALRETDTMDTFVCSSWYFDRFCSPHESKQPFSREAVDYWMPVDQYIGGVEHAILHLMYARFFTKFLFDINVLSCQEPFTRLLTQGMVLKDNAKMSKSKGNVVSPEEIIDTYGADTARLFILFASPPERDLEWSEQGVEGAFRFLNRVWRLVSELAEGIKDLPAAEHFPELDSEAKNLRFKTHATIKKVTEDIGERFNFNTAISAIMELSNTLGAYKGIKKPNWPVVKEAVDNLLILLSPFSPHICEELWQLTGHAESIYLQKWPKYDPEALLQEEIEIVLQISGKVRDRIMVPVDAGREELEKIALDNPKIRELTRGKEIVKLIVVPGKLVNVVAK.

Residues 42–52 (PYPSGHLHMGH) carry the 'HIGH' region motif. The 'KMSKS' region motif lies at 581-585 (KMSKS). Residue Lys584 participates in ATP binding.

This sequence belongs to the class-I aminoacyl-tRNA synthetase family.

The protein localises to the cytoplasm. The enzyme catalyses tRNA(Leu) + L-leucine + ATP = L-leucyl-tRNA(Leu) + AMP + diphosphate. The sequence is that of Leucine--tRNA ligase from Syntrophomonas wolfei subsp. wolfei (strain DSM 2245B / Goettingen).